Here is a 1473-residue protein sequence, read N- to C-terminus: G8 domain-containing protein DDB_G0286311 (1473 aa).

An N-terminal signal peptide occupies residues 1–21 (MKRFFIVILFILLVCIFNVKS). A helical membrane pass occupies residues 105-125 (IVLMIATITGSLLFIRFNIGF). Asn126 carries an N-linked (GlcNAc...) asparagine glycan. The chain crosses the membrane as a helical span at residues 130 to 150 (TLIILIIGTIFLIGSSHSITL). Residues Asn203, Asn241, and Asn275 are each glycosylated (N-linked (GlcNAc...) asparagine). A compositionally biased stretch (low complexity) spans 298-375 (TGTTPTTTPT…PTTTPTTTPT (78 aa)). The disordered stretch occupies residues 298–400 (TGTTPTTTPT…SSSPSSPSFS (103 aa)). The segment covering 376–389 (DSCPTTSTWRPTMA) has biased composition (polar residues). Over residues 390–400 (SSSSPSSPSFS) the composition is skewed to low complexity. N-linked (GlcNAc...) asparagine glycans are attached at residues Asn444, Asn637, Asn680, Asn1078, Asn1088, Asn1176, Asn1206, Asn1225, Asn1389, and Asn1424. Positions 626–754 (SIWSSGIVPL…YHNTWSKLST (129 aa)) constitute a G8 domain.

It belongs to the comF family.

It localises to the membrane. The protein is G8 domain-containing protein DDB_G0286311 of Dictyostelium discoideum (Social amoeba).